Here is a 194-residue protein sequence, read N- to C-terminus: Prostaglandin-H2 D-isomerase (194 aa).

A signal peptide spans 1–24; it reads MAASHTLWMGLVLLGVLGVLQTRA. A Pyrrolidone carboxylic acid modification is found at Gln-25. The N-linked (GlcNAc...) asparagine glycan is linked to Asn-51. Cys-65 acts as the Nucleophile in catalysis. A glycan (N-linked (GlcNAc...) asparagine) is linked at Asn-78. A disulfide bridge connects residues Cys-89 and Cys-189.

The protein belongs to the calycin superfamily. Lipocalin family. As to quaternary structure, monomer. As to expression, in the male reproductive system, it is expressed in the testis and epididymis, and is secreted into the seminal fluid.

It is found in the rough endoplasmic reticulum. Its subcellular location is the nucleus membrane. It localises to the golgi apparatus. The protein localises to the cytoplasm. The protein resides in the perinuclear region. It is found in the secreted. The catalysed reaction is prostaglandin H2 = prostaglandin D2. Functionally, catalyzes the conversion of PGH2 to PGD2, a prostaglandin involved in smooth muscle contraction/relaxation and a potent inhibitor of platelet aggregation. Involved in a variety of CNS functions, such as sedation, NREM sleep and PGE2-induced allodynia, and may have an anti-apoptotic role in oligodendrocytes. Binds small non-substrate lipophilic molecules, including biliverdin, bilirubin, retinal, retinoic acid and thyroid hormone, and may act as a scavenger for harmful hydrophobic molecules and as a secretory retinoid and thyroid hormone transporter. Possibly involved in development and maintenance of the blood-brain, blood-retina, blood-aqueous humor and blood-testis barrier. It is likely to play important roles in both maturation and maintenance of the central nervous system and male reproductive system. Involved in PLA2G3-dependent maturation of mast cells. PLA2G3 is secreted by immature mast cells and acts on nearby fibroblasts upstream to PTDGS to synthesize PGD2, which in turn promotes mast cell maturation and degranulation via PTGDR. The polypeptide is Prostaglandin-H2 D-isomerase (PTGDS) (Equus caballus (Horse)).